A 512-amino-acid chain; its full sequence is GMP synthase [glutamine-hydrolyzing] (512 aa).

The Glutamine amidotransferase type-1 domain maps to 5 to 195 (GIVILDFGSQ…IFGIAKAEKN (191 aa)). The Nucleophile role is filled by Cys-82. Catalysis depends on residues His-169 and Glu-171. One can recognise a GMPS ATP-PPase domain in the interval 196-387 (WSMENYIEST…LGIPDYMVDR (192 aa)). Residue 223–229 (SGGVDSS) participates in ATP binding.

Homodimer.

The catalysed reaction is XMP + L-glutamine + ATP + H2O = GMP + L-glutamate + AMP + diphosphate + 2 H(+). Its pathway is purine metabolism; GMP biosynthesis; GMP from XMP (L-Gln route): step 1/1. Functionally, catalyzes the synthesis of GMP from XMP. This Fusobacterium nucleatum subsp. nucleatum (strain ATCC 25586 / DSM 15643 / BCRC 10681 / CIP 101130 / JCM 8532 / KCTC 2640 / LMG 13131 / VPI 4355) protein is GMP synthase [glutamine-hydrolyzing].